The sequence spans 129 residues: Small ribosomal subunit protein uS12 (129 aa).

A 3-methylthioaspartic acid modification is found at Asp89.

The protein belongs to the universal ribosomal protein uS12 family. As to quaternary structure, part of the 30S ribosomal subunit. Contacts proteins S8 and S17. May interact with IF1 in the 30S initiation complex.

In terms of biological role, with S4 and S5 plays an important role in translational accuracy. Interacts with and stabilizes bases of the 16S rRNA that are involved in tRNA selection in the A site and with the mRNA backbone. Located at the interface of the 30S and 50S subunits, it traverses the body of the 30S subunit contacting proteins on the other side and probably holding the rRNA structure together. The combined cluster of proteins S8, S12 and S17 appears to hold together the shoulder and platform of the 30S subunit. This chain is Small ribosomal subunit protein uS12, found in Helicobacter hepaticus (strain ATCC 51449 / 3B1).